The chain runs to 291 residues: m-AAA protease-interacting protein 1, mitochondrial (291 aa).

The N-terminal 96 residues, 1–96, are a transit peptide targeting the mitochondrion; the sequence is MALAVRLLPR…TFPSCPRRTY (96 aa).

As to quaternary structure, interacts with AFG3L2. Interacts with SPG7. Interacts with SMDT1/EMRE (via the N-terminal transit peptide); interaction is direct and takes place before maturation of SMDT1/EMRE.

Its subcellular location is the mitochondrion matrix. Functionally, promotes sorting of SMDT1/EMRE in mitochondria by ensuring its maturation. Interacts with the transit peptide region of SMDT1/EMRE precursor protein in the mitochondrial matrix, leading to protect it against protein degradation by YME1L1, thereby ensuring SMDT1/EMRE maturation by the mitochondrial processing peptidase (PMPCA and PMPCB). The polypeptide is m-AAA protease-interacting protein 1, mitochondrial (Bos taurus (Bovine)).